We begin with the raw amino-acid sequence, 67 residues long: Phycobilisome 7.8 kDa linker polypeptide, allophycocyanin-associated, core (67 aa).

One can recognise a CpcD-like domain in the interval 1–56; the sequence is MRMFRITACVPSQTRIRTQRELQNTYFTKLVPYDNSFREQQRIMKMGGKIVKVELA.

The protein belongs to the phycobilisome linker protein family.

It localises to the cellular thylakoid membrane. In terms of biological role, rod linker protein, associated with allophycocyanin. Linker polypeptides determine the state of aggregation and the location of the disk-shaped phycobiliprotein units within the phycobilisome and modulate their spectroscopic properties in order to mediate a directed and optimal energy transfer. The protein is Phycobilisome 7.8 kDa linker polypeptide, allophycocyanin-associated, core (apcC) of Synechocystis sp. (strain ATCC 27184 / PCC 6803 / Kazusa).